The primary structure comprises 205 residues: Holliday junction branch migration complex subunit RuvA (205 aa).

A domain I region spans residues 1–64 (MIGKLRGLID…EDQIKLFGFR (64 aa)). A domain II region spans residues 65-143 (SDVEREWFRL…AFANVDPGVV (79 aa)). Residues 144–154 (RLSGAIEESRA) form a flexible linker region. The interval 154–205 (APQPVADAISALINLGYGQPQAAAAIAAASRAAGDKAETAQLIRLGLKELAK) is domain III.

This sequence belongs to the RuvA family. In terms of assembly, homotetramer. Forms an RuvA(8)-RuvB(12)-Holliday junction (HJ) complex. HJ DNA is sandwiched between 2 RuvA tetramers; dsDNA enters through RuvA and exits via RuvB. An RuvB hexamer assembles on each DNA strand where it exits the tetramer. Each RuvB hexamer is contacted by two RuvA subunits (via domain III) on 2 adjacent RuvB subunits; this complex drives branch migration. In the full resolvosome a probable DNA-RuvA(4)-RuvB(12)-RuvC(2) complex forms which resolves the HJ.

The protein resides in the cytoplasm. The RuvA-RuvB-RuvC complex processes Holliday junction (HJ) DNA during genetic recombination and DNA repair, while the RuvA-RuvB complex plays an important role in the rescue of blocked DNA replication forks via replication fork reversal (RFR). RuvA specifically binds to HJ cruciform DNA, conferring on it an open structure. The RuvB hexamer acts as an ATP-dependent pump, pulling dsDNA into and through the RuvAB complex. HJ branch migration allows RuvC to scan DNA until it finds its consensus sequence, where it cleaves and resolves the cruciform DNA. The sequence is that of Holliday junction branch migration complex subunit RuvA from Bradyrhizobium sp. (strain ORS 278).